The following is a 139-amino-acid chain: Putative pre-16S rRNA nuclease (139 aa).

This sequence belongs to the YqgF nuclease family.

Its subcellular location is the cytoplasm. Its function is as follows. Could be a nuclease involved in processing of the 5'-end of pre-16S rRNA. The sequence is that of Putative pre-16S rRNA nuclease from Streptococcus sanguinis (strain SK36).